Reading from the N-terminus, the 839-residue chain is Katanin p80 WD40 repeat-containing subunit B1 homolog KTN80.3 (839 aa).

7 WD repeats span residues Ala14–Ser54, Gly57–Thr96, Gly99–Thr138, Gly141–Lys182, His184–Ser222, Thr225–Asp265, and Gly267–Met304. The DWD box motif lies at Phe115–Arg131. 4 disordered regions span residues Pro303–Leu340, Gly357–Ser435, Leu501–Lys561, and Ser575–Met648. 6 stretches are compositionally biased toward polar residues: residues Gly307–Lys334, Thr375–Asp385, Thr411–Ser435, Leu501–Pro533, Asp589–Thr602, and Val630–Met648.

The protein belongs to the WD repeat KATNB1 family. Component of KTN80-KTN1 complexes composed of a hexamer of KTN1-KTN80 heterodimers that sense microtubule (MT) geometry to confer precise MT severing. Interacts directly with AAA1/KTN1 and KTN80.1, and weakly with KTN80.4. As to expression, expressed in siliques, flowers, leaves, stems and roots.

The protein resides in the cytoplasm. It localises to the cytoskeleton. May participate in a complex which severs microtubules in an ATP-dependent manner. Microtubule severing may promote rapid reorganization of cellular microtubule arrays. Confers precision to microtubule (MT) severing by specific targeting of KTN1 to MT cleavage sites such as crossover or branching nucleation sites. Together with other KTN80s, regulates cell elongation by modulating MT organization. The chain is Katanin p80 WD40 repeat-containing subunit B1 homolog KTN80.3 from Arabidopsis thaliana (Mouse-ear cress).